The chain runs to 1146 residues: Reverse gyrase 1 (1146 aa).

Residues 1 to 38 form an RG N-terminal-type zinc finger; it reads MIKAIFDTLCPNCGGEISAERLLKGLPCEKCLPEEVNR. C10, C13, C28, and C31 together coordinate Zn(2+). Residues Q79 and 96 to 103 contribute to the ATP site; that span reads APTGVGKT. Positions 83 to 240 constitute a Helicase ATP-binding domain; the sequence is ARKVFLGRSF…RLKEKPNKSE (158 aa). The DEAD box motif lies at 197–200; the sequence is DDVD. The Helicase C-terminal domain maps to 412–565; that stretch reads HLLWALLSLR…FKKIEEVDLK (154 aa). Residues 592-1146 form a topoisomerase I region; that stretch reads EHVKPVLVVV…KVNEFEKANV (555 aa). The Toprim domain occupies 596-728; it reads PVLVVVESPN…NVERIEFHEV (133 aa). Residues E602 and D697 each coordinate Mg(2+). The Topo IA-type catalytic domain occupies 744-1142; it reads NENLVKAQLV…ELYKKVNEFE (399 aa). Y891 (O-(5'-phospho-DNA)-tyrosine intermediate) is an active-site residue.

In the N-terminal section; belongs to the DEAD box helicase family. DDVD subfamily. The protein in the C-terminal section; belongs to the type IA topoisomerase family. In terms of assembly, monomer. Requires Zn(2+) as cofactor. The cofactor is Mg(2+).

It localises to the cytoplasm. The enzyme catalyses ATP + H2O = ADP + phosphate + H(+). Functionally, modifies the topological state of DNA by introducing positive supercoils in an ATP-dependent process, increasing the linking number in steps of +1. Binds to single-stranded DNA, transiently cleaves and then rejoins the ends, introducing a positive supercoil in the process. The scissile phosphodiester is attacked by the catalytic tyrosine of the enzyme, resulting in the formation of a DNA-(5'-phosphotyrosyl)-enzyme intermediate. Probably involved in rewinding DNA strands in regions of the chromosome that have opened up to allow replication, transcription, DNA repair and/or for DNA protection. This chain is Reverse gyrase 1, found in Aquifex aeolicus (strain VF5).